Consider the following 585-residue polypeptide: A-type ATP synthase subunit A (585 aa).

231 to 238 contacts ATP; it reads GPFGSGKT.

This sequence belongs to the ATPase alpha/beta chains family. Has multiple subunits with at least A(3), B(3), C, D, E, F, H, I and proteolipid K(x).

Its subcellular location is the cell membrane. The enzyme catalyses ATP + H2O + 4 H(+)(in) = ADP + phosphate + 5 H(+)(out). Its function is as follows. Component of the A-type ATP synthase that produces ATP from ADP in the presence of a proton gradient across the membrane. The A chain is the catalytic subunit. In Thermococcus onnurineus (strain NA1), this protein is A-type ATP synthase subunit A.